We begin with the raw amino-acid sequence, 395 residues long: Elongation factor Tu (395 aa).

The region spanning 10–204 (KSHVNIGTIG…AVDEYIPTPE (195 aa)) is the tr-type G domain. The interval 19–26 (GHVDHGKT) is G1. 19-26 (GHVDHGKT) provides a ligand contact to GTP. T26 provides a ligand contact to Mg(2+). The interval 60–64 (GITIN) is G2. The segment at 81 to 84 (DCPG) is G3. GTP is bound by residues 81–85 (DCPGH) and 136–139 (NKMD). The G4 stretch occupies residues 136 to 139 (NKMD). Residues 174–176 (SAL) form a G5 region.

It belongs to the TRAFAC class translation factor GTPase superfamily. Classic translation factor GTPase family. EF-Tu/EF-1A subfamily. Monomer.

The protein resides in the cytoplasm. The enzyme catalyses GTP + H2O = GDP + phosphate + H(+). GTP hydrolase that promotes the GTP-dependent binding of aminoacyl-tRNA to the A-site of ribosomes during protein biosynthesis. The protein is Elongation factor Tu of Enterococcus faecalis (strain ATCC 700802 / V583).